We begin with the raw amino-acid sequence, 531 residues long: Chaperonin GroEL 2 (531 aa).

ATP is bound by residues 30–33 (TLGP), 87–91 (DGTTT), glycine 414, and aspartate 494.

It belongs to the chaperonin (HSP60) family. As to quaternary structure, forms a cylinder of 14 subunits composed of two heptameric rings stacked back-to-back. Interacts with the co-chaperonin GroES.

It localises to the cytoplasm. It carries out the reaction ATP + H2O + a folded polypeptide = ADP + phosphate + an unfolded polypeptide.. In terms of biological role, together with its co-chaperonin GroES, plays an essential role in assisting protein folding. The GroEL-GroES system forms a nano-cage that allows encapsulation of the non-native substrate proteins and provides a physical environment optimized to promote and accelerate protein folding. This Cutibacterium acnes (strain DSM 16379 / KPA171202) (Propionibacterium acnes) protein is Chaperonin GroEL 2.